The chain runs to 196 residues: Cilia- and flagella-associated protein 107 (196 aa).

Mn regions lie at residues 47 to 62 (TPQCIYRKEYVPMPDH) and 97 to 109 (ISTYDDHYNRHNY).

In terms of assembly, microtubule inner protein component of sperm flagellar doublet microtubules.

It localises to the cytoplasm. The protein resides in the cytoskeleton. The protein localises to the cilium axoneme. Its subcellular location is the flagellum axoneme. In terms of biological role, microtubule inner protein (MIP) part of the dynein-decorated doublet microtubules (DMTs) in cilia axoneme, which is required for motile cilia beating. This chain is Cilia- and flagella-associated protein 107, found in Mus musculus (Mouse).